The chain runs to 421 residues: Putative NBPF family member NBPF7 (421 aa).

Residues 87–143 (IKSMLREELQFKEEKLAEQLKQAEELRQYKVLVHSQERELIQLREKLREGRDASHSL) are a coiled coil. Disordered stretches follow at residues 179–251 (VHKL…KITS), 312–334 (EKEV…HDVS), and 402–421 (YNSK…FTED). Olduvai domains are found at residues 190–279 (EDEN…NILL) and 280–391 (ENQN…RMSQ). A compositionally biased stretch (basic and acidic residues) spans 194–217 (DKTKELDKVQESPAPREEQKAEEK). Over residues 230–243 (TYSNSHGPSDSNPP) the composition is skewed to polar residues. Positions 312–333 (EKEVLQDSPEERVTTSCSDHDV) are enriched in basic and acidic residues. The segment covering 403 to 421 (NSKPSSIPNTTLQGSFTED) has biased composition (polar residues).

This sequence belongs to the NBPF family.

Its subcellular location is the cytoplasm. The polypeptide is Putative NBPF family member NBPF7 (Homo sapiens (Human)).